A 715-amino-acid polypeptide reads, in one-letter code: Fatty acid oxidation complex subunit alpha (715 aa).

Residues 1 to 190 (MIYEGKAITV…KVSAVDAVVT (190 aa)) form an enoyl-CoA hydratase/isomerase region. A substrate-binding site is contributed by Asp-297. The segment at 312–715 (KDVKQAAVLG…MAKNGQSFFG (404 aa)) is 3-hydroxyacyl-CoA dehydrogenase. Residues Met-325, Asp-344, 401–403 (VVE), Lys-408, and Ser-430 each bind NAD(+). His-451 functions as the For 3-hydroxyacyl-CoA dehydrogenase activity in the catalytic mechanism. Asn-454 contacts NAD(+). Asn-501 and Tyr-660 together coordinate substrate.

It in the N-terminal section; belongs to the enoyl-CoA hydratase/isomerase family. This sequence in the C-terminal section; belongs to the 3-hydroxyacyl-CoA dehydrogenase family. In terms of assembly, heterotetramer of two alpha chains (FadB) and two beta chains (FadA).

It catalyses the reaction a (3S)-3-hydroxyacyl-CoA + NAD(+) = a 3-oxoacyl-CoA + NADH + H(+). The catalysed reaction is a (3S)-3-hydroxyacyl-CoA = a (2E)-enoyl-CoA + H2O. The enzyme catalyses a 4-saturated-(3S)-3-hydroxyacyl-CoA = a (3E)-enoyl-CoA + H2O. It carries out the reaction (3S)-3-hydroxybutanoyl-CoA = (3R)-3-hydroxybutanoyl-CoA. It catalyses the reaction a (3Z)-enoyl-CoA = a 4-saturated (2E)-enoyl-CoA. The catalysed reaction is a (3E)-enoyl-CoA = a 4-saturated (2E)-enoyl-CoA. The protein operates within lipid metabolism; fatty acid beta-oxidation. Functionally, involved in the aerobic and anaerobic degradation of long-chain fatty acids via beta-oxidation cycle. Catalyzes the formation of 3-oxoacyl-CoA from enoyl-CoA via L-3-hydroxyacyl-CoA. It can also use D-3-hydroxyacyl-CoA and cis-3-enoyl-CoA as substrate. The polypeptide is Fatty acid oxidation complex subunit alpha (Pseudomonas fragi).